The chain runs to 109 residues: DNA-binding protein MJ0691 (109 aa).

The protein belongs to the PDCD5 family.

The polypeptide is DNA-binding protein MJ0691 (Methanocaldococcus jannaschii (strain ATCC 43067 / DSM 2661 / JAL-1 / JCM 10045 / NBRC 100440) (Methanococcus jannaschii)).